The chain runs to 700 residues: Peroxisomal acyl-coenzyme A oxidase 1 (700 aa).

Residues Thr147, Gly186, and 412-417 (CGGHGY) contribute to the FAD site. Catalysis depends on Glu437, which acts as the Proton acceptor. The Microbody targeting signal signature appears at 698 to 700 (SKL).

This sequence belongs to the acyl-CoA oxidase family. It depends on FAD as a cofactor.

It localises to the peroxisome. It catalyses the reaction a 2,3-saturated acyl-CoA + O2 = a (2E)-enoyl-CoA + H2O2. Its function is as follows. Catalyzes the desaturation of acyl-CoAs to 2-trans-enoyl-CoAs. First enzyme of the fatty acid beta-oxidation pathway. The chain is Peroxisomal acyl-coenzyme A oxidase 1 (acox1) from Dictyostelium discoideum (Social amoeba).